The chain runs to 83 residues: AAPANAVTADDPTAIALKYNQDATKSERVAAARPGLPPEEQHCANCQFMQANVGEGDWKGCQLFPGKLINVNGWCASWTLKAG.

[4Fe-4S] cluster is bound by residues cysteine 43, cysteine 46, cysteine 61, and cysteine 75.

Belongs to the high-potential iron-sulfur protein (HiPIP) family. As to quaternary structure, homodimer.

Functionally, specific class of high-redox-potential 4Fe-4S ferredoxins. Functions in anaerobic electron transport in most purple and in some other photosynthetic bacteria and in at least one genus (Paracoccus) of halophilic, denitrifying bacteria. This chain is High-potential iron-sulfur protein (hip), found in Thermochromatium tepidum (Chromatium tepidum).